A 450-amino-acid chain; its full sequence is Interferon-related developmental regulator 1 (450 aa).

The segment covering 1–10 has biased composition (basic residues); it reads MPKNKKRNTP. A disordered region spans residues 1–46; the sequence is MPKNKKRNTPHRGGSGGGGSGAAATTAATAGGQHRNVQPFSDEDAS. A compositionally biased stretch (low complexity) spans 22–32; the sequence is AAATTAATAGG.

Belongs to the IFRD family. Interacts with PSIP1/LEDGF.

Could play a role in regulating gene activity in the proliferative and/or differentiative pathways induced by NGF. May be an autocrine factor that attenuates or amplifies the initial ligand-induced signal. The sequence is that of Interferon-related developmental regulator 1 (IFRD1) from Sus scrofa (Pig).